The chain runs to 159 residues: NADH-quinone oxidoreductase subunit I (159 aa).

4Fe-4S ferredoxin-type domains are found at residues 50 to 80 (QRRY…IESE) and 90 to 119 (KRYD…ETHI). The [4Fe-4S] cluster site is built by Cys-60, Cys-63, Cys-66, Cys-70, Cys-99, Cys-102, Cys-105, and Cys-109.

Belongs to the complex I 23 kDa subunit family. NDH-1 is composed of 14 different subunits. Subunits NuoA, H, J, K, L, M, N constitute the membrane sector of the complex. The cofactor is [4Fe-4S] cluster.

Its subcellular location is the cell inner membrane. The enzyme catalyses a quinone + NADH + 5 H(+)(in) = a quinol + NAD(+) + 4 H(+)(out). In terms of biological role, NDH-1 shuttles electrons from NADH, via FMN and iron-sulfur (Fe-S) centers, to quinones in the respiratory chain. The immediate electron acceptor for the enzyme in this species is believed to be ubiquinone. Couples the redox reaction to proton translocation (for every two electrons transferred, four hydrogen ions are translocated across the cytoplasmic membrane), and thus conserves the redox energy in a proton gradient. The polypeptide is NADH-quinone oxidoreductase subunit I (Neisseria meningitidis serogroup A / serotype 4A (strain DSM 15465 / Z2491)).